A 435-amino-acid polypeptide reads, in one-letter code: Glutamyl-tRNA reductase (435 aa).

Residues 49–52 (TCNR), Ser-109, 114–116 (ETQ), and Gln-120 contribute to the substrate site. The Nucleophile role is filled by Cys-50. Position 189–194 (189–194 (GAGEMS)) interacts with NADP(+).

This sequence belongs to the glutamyl-tRNA reductase family. In terms of assembly, homodimer.

It catalyses the reaction (S)-4-amino-5-oxopentanoate + tRNA(Glu) + NADP(+) = L-glutamyl-tRNA(Glu) + NADPH + H(+). The protein operates within porphyrin-containing compound metabolism; protoporphyrin-IX biosynthesis; 5-aminolevulinate from L-glutamyl-tRNA(Glu): step 1/2. In terms of biological role, catalyzes the NADPH-dependent reduction of glutamyl-tRNA(Glu) to glutamate 1-semialdehyde (GSA). The polypeptide is Glutamyl-tRNA reductase (Listeria monocytogenes serotype 4b (strain CLIP80459)).